The following is a 413-amino-acid chain: Phosphopentomutase (413 aa).

The Mn(2+) site is built by Asp-11, Asp-306, His-311, Asp-347, His-348, and His-359.

This sequence belongs to the phosphopentomutase family. The cofactor is Mn(2+).

It is found in the cytoplasm. It carries out the reaction 2-deoxy-alpha-D-ribose 1-phosphate = 2-deoxy-D-ribose 5-phosphate. The catalysed reaction is alpha-D-ribose 1-phosphate = D-ribose 5-phosphate. Its pathway is carbohydrate degradation; 2-deoxy-D-ribose 1-phosphate degradation; D-glyceraldehyde 3-phosphate and acetaldehyde from 2-deoxy-alpha-D-ribose 1-phosphate: step 1/2. In terms of biological role, isomerase that catalyzes the conversion of deoxy-ribose 1-phosphate (dRib-1-P) and ribose 1-phosphate (Rib-1-P) to deoxy-ribose 5-phosphate (dRib-5-P) and ribose 5-phosphate (Rib-5-P), respectively. This Helicobacter pylori (strain G27) protein is Phosphopentomutase.